Reading from the N-terminus, the 33-residue chain is EDCIAVGQLCVFWNIGRPCCSGLCVFACTVKLP.

Cystine bridges form between C3–C20, C10–C24, and C19–C28. The residue at position 33 (P33) is a Proline amide.

In terms of tissue distribution, expressed by the venom duct.

The protein resides in the secreted. Its function is as follows. Omega-conotoxins act at presynaptic membranes, they bind and block voltage-gated calcium channels (Cav). Has strong insecticidal properties at a dose of only 100 pmol/g of body weight (when injected into the haemocoel of the wax moth G.mellonella larvae). Provoques tremor and uncontrolled movements in insect larvae, that are typical symptoms caused by neurotoxins. On fish G.niger, intraperitoneal injection of the toxin causes full extension of the fins, change in posture, breathing difficulties (at 30 and 100 pmol/g body weight) and death (at 100 pmol/g body weight). The protein is Omega-conotoxin-like Vn2 of Conus ventricosus (Mediterranean cone).